Reading from the N-terminus, the 89-residue chain is Small ribosomal subunit protein uS14 (89 aa).

This sequence belongs to the universal ribosomal protein uS14 family. As to quaternary structure, part of the 30S ribosomal subunit. Contacts proteins S3 and S10.

Functionally, binds 16S rRNA, required for the assembly of 30S particles and may also be responsible for determining the conformation of the 16S rRNA at the A site. The protein is Small ribosomal subunit protein uS14 of Chloroherpeton thalassium (strain ATCC 35110 / GB-78).